Consider the following 288-residue polypeptide: MLIFAPAKINLTLDILGKRPDGYHELWSVMQAITLGDLVEIEPAEGINLRVVGADLPVDSTNIAFKAVQALRAATGKAIGASITIRKKIPLEAGLAGGSADGAAVLYGLNKLYNLNLSQEELLEIGAKISADIPFCLTGGTALVQGIGEKVKKLPPLKKGYFVIYKPPFGISTKEAYLRLAGKDLTKEHPDREKILKALGKENLEDLGKFLKNLLEISALEINPEIYKYKNELLNLKPLGVLMSGSGSALFALTENLKKAKEIYYQLTLPGQKFIVRPYAAGPTCLKL.

Lys8 is a catalytic residue. 90 to 100 (PLEAGLAGGSA) serves as a coordination point for ATP. Asp132 is an active-site residue.

This sequence belongs to the GHMP kinase family. IspE subfamily.

The catalysed reaction is 4-CDP-2-C-methyl-D-erythritol + ATP = 4-CDP-2-C-methyl-D-erythritol 2-phosphate + ADP + H(+). Its pathway is isoprenoid biosynthesis; isopentenyl diphosphate biosynthesis via DXP pathway; isopentenyl diphosphate from 1-deoxy-D-xylulose 5-phosphate: step 3/6. In terms of biological role, catalyzes the phosphorylation of the position 2 hydroxy group of 4-diphosphocytidyl-2C-methyl-D-erythritol. The protein is 4-diphosphocytidyl-2-C-methyl-D-erythritol kinase of Carboxydothermus hydrogenoformans (strain ATCC BAA-161 / DSM 6008 / Z-2901).